The sequence spans 256 residues: Thiazole synthase (256 aa).

Lysine 95 (schiff-base intermediate with DXP) is an active-site residue. Residues glycine 156, 182–183, and 204–205 each bind 1-deoxy-D-xylulose 5-phosphate; these read AG and NT.

Belongs to the ThiG family. As to quaternary structure, homotetramer. Forms heterodimers with either ThiH or ThiS.

The protein resides in the cytoplasm. The catalysed reaction is [ThiS sulfur-carrier protein]-C-terminal-Gly-aminoethanethioate + 2-iminoacetate + 1-deoxy-D-xylulose 5-phosphate = [ThiS sulfur-carrier protein]-C-terminal Gly-Gly + 2-[(2R,5Z)-2-carboxy-4-methylthiazol-5(2H)-ylidene]ethyl phosphate + 2 H2O + H(+). The protein operates within cofactor biosynthesis; thiamine diphosphate biosynthesis. In terms of biological role, catalyzes the rearrangement of 1-deoxy-D-xylulose 5-phosphate (DXP) to produce the thiazole phosphate moiety of thiamine. Sulfur is provided by the thiocarboxylate moiety of the carrier protein ThiS. In vitro, sulfur can be provided by H(2)S. The polypeptide is Thiazole synthase (Idiomarina loihiensis (strain ATCC BAA-735 / DSM 15497 / L2-TR)).